Consider the following 302-residue polypeptide: Tritrans,polycis-undecaprenyl-diphosphate synthase (geranylgeranyl-diphosphate specific) (302 aa).

D33 is a catalytic residue. Mg(2+) is bound at residue D33. Residues 34 to 37 (GNRR) and 78 to 80 (STE) each bind substrate. N81 functions as the Proton acceptor in the catalytic mechanism. Substrate is bound by residues F82, R84, R203, and 209-211 (RTS).

The protein belongs to the UPP synthase family. Homodimer. Mg(2+) serves as cofactor.

The enzyme catalyses geranylgeranyl diphosphate + 7 isopentenyl diphosphate = tri-trans,hepta-cis-undecaprenyl diphosphate + 7 diphosphate. Functionally, catalyzes the sequential condensation of isopentenyl diphosphate (IPP) with geranylgeranyl diphosphate (GGPP) to yield (2Z,6Z,10Z,14Z,18Z,22Z,26Z,30E,34E,38E)-undecaprenyl diphosphate (tritrans,heptacis-UPP). It is probably the precursor of glycosyl carrier lipids. The sequence is that of Tritrans,polycis-undecaprenyl-diphosphate synthase (geranylgeranyl-diphosphate specific) from Halobacterium salinarum (strain ATCC 700922 / JCM 11081 / NRC-1) (Halobacterium halobium).